A 147-amino-acid chain; its full sequence is MGGCMHSTQDKSLHLEGDPNPSAAPTSTCAPRKMPKRISISKQLASVKALRKCSDLEKAIATTALIFRNSSDSDGKLEKAIAKDLLQTQFRNFAEGQETKPKYREILSELDEHTENKLDFEDFMILLLSITVMSDLLQNIRNVKIMK.

The tract at residues 1–32 (MGGCMHSTQDKSLHLEGDPNPSAAPTSTCAPR) is disordered. Residues 8 to 17 (TQDKSLHLEG) show a composition bias toward basic and acidic residues.

It belongs to the S-100 family.

The protein resides in the cell projection. It localises to the cilium. May be a component of the linker structure that bridges the ciliary membrane and peripheral singlet microtubules. In Homo sapiens (Human), this protein is Sentan (SNTN).